The primary structure comprises 443 residues: 26S proteasome regulatory subunit 4 homolog A (443 aa).

Disordered stretches follow at residues 1 to 55 (MGQG…LPTV) and 87 to 108 (RLKPQEEKAEEDRSKVDDLRGT). 2 stretches are compositionally biased toward basic and acidic residues: residues 12-28 (QGDRKPDGGDKKEKKFE) and 87-106 (RLKPQEEKAEEDRSKVDDLR). 229-236 (GEPGTGKT) provides a ligand contact to ATP. Glycyl lysine isopeptide (Lys-Gly) (interchain with G-Cter in ubiquitin) cross-links involve residues lysine 296 and lysine 433.

The protein belongs to the AAA ATPase family. In terms of assembly, component of the 19S regulatory particle (RP/PA700) base subcomplex of the 26S proteasome. The 26S proteasome is composed of a core protease (CP), known as the 20S proteasome, capped at one or both ends by the 19S regulatory particle (RP/PA700). The RP/PA700 complex is composed of at least 17 different subunits in two subcomplexes, the base and the lid, which form the portions proximal and distal to the 20S proteolytic core, respectively. Required for innate immunity. Interacts with UNI. As to expression, preferentially expressed in the root and shoot apical meristem.

The protein resides in the cytoplasm. Its subcellular location is the P-body. The protein localises to the nucleus. The 26S protease is involved in the ATP-dependent degradation of ubiquitinated proteins. The regulatory (or ATPase) complex confers ATP dependency and substrate specificity to the 26S complex. Interacts with transit peptides of proteins targeted to the chloroplast, and may be involved in the degradation of unimported plastid protein precursors. Is required for the maintenance of postembryonic root and shoot meristems. Has a specific role in the regulation of organs size. Acts redundantly with RPT2B in the regulation of gametogenesis. With RPT2B plays a critical role in 26S proteasome assembly. Acts as an upstream signaling component for inducing both defense and morphological phenotypes in the constitutive active uni-1D mutant. Acts as a negative regulator of endoreduplication in trichome cells. May function after the completion of the third endoreduplication step (8C to 16C) mediated by RHL1. Acts as a negative regulator of transcriptional gene silencing (TGS) at specific endogenous genes through DNA methylation. Promotes post-transcriptional gene silencing (PTGS) by limiting the degradation of transgene aberrant RNAs by the RNA quality control (RQC) machinery, thus favoring their entry into cytoplasmic siRNA bodies where they can trigger PTGS. Involved in tolerance to zinc deficiency, possibly through alleviation of oxidative stresses or processing of poly-ubiquitinated proteins. Required for resistance to the fungal pathogen Golovinomyces cichoracearum. This is 26S proteasome regulatory subunit 4 homolog A from Arabidopsis thaliana (Mouse-ear cress).